A 216-amino-acid polypeptide reads, in one-letter code: Large ribosomal subunit protein uL1 (216 aa).

This sequence belongs to the universal ribosomal protein uL1 family. Part of the 50S ribosomal subunit.

Its function is as follows. Binds directly to 23S rRNA. Probably involved in E site tRNA release. In terms of biological role, protein L1 is also a translational repressor protein, it controls the translation of its operon by binding to its mRNA. The polypeptide is Large ribosomal subunit protein uL1 (Thermococcus kodakarensis (strain ATCC BAA-918 / JCM 12380 / KOD1) (Pyrococcus kodakaraensis (strain KOD1))).